The sequence spans 436 residues: mRNA cap guanine-N(7) methyltransferase (436 aa).

Residues 1 to 50 (MSTKPEKPIWMSQEDYDRQYGSITGDESSTVSKKDSKVTANAPGDGNGSL) form a disordered region. One can recognise an mRNA cap 0 methyltransferase domain in the interval 141–424 (SPIIKLRNFN…FYTMFAFRKV (284 aa)). 150–151 (NN) is an mRNA binding site. 6 residues coordinate S-adenosyl-L-methionine: Lys-154, Gly-172, Asp-194, Asp-223, Gln-249, and Tyr-254.

It belongs to the class I-like SAM-binding methyltransferase superfamily. mRNA cap 0 methyltransferase family.

The protein localises to the nucleus. It carries out the reaction a 5'-end (5'-triphosphoguanosine)-ribonucleoside in mRNA + S-adenosyl-L-methionine = a 5'-end (N(7)-methyl 5'-triphosphoguanosine)-ribonucleoside in mRNA + S-adenosyl-L-homocysteine. Functionally, responsible for methylating the 5'-cap structure of mRNAs. The sequence is that of mRNA cap guanine-N(7) methyltransferase (ABD1) from Saccharomyces cerevisiae (strain ATCC 204508 / S288c) (Baker's yeast).